The chain runs to 480 residues: Carboxy-terminal processing protease CtpB (480 aa).

The first 23 residues, 1–23 (MNQKIMAVIAAGSMLFGGAGVYA), serve as a signal peptide directing secretion. A PDZ domain is found at 92-182 (SVYMDKQTAK…SSVSMKIQRP (91 aa)). The interval 113 to 116 (GIGA) is peptide binding. S309 functions as the Nucleophile in the catalytic mechanism. Residues K334 and Q338 each act as charge relay system in the active site.

The protein belongs to the peptidase S41A family. In terms of assembly, homodimer. Is cleaved by SpoIVB in vitro and in vivo but this cleavage does not appear to be necessary for CtpB activation. CtpB can also cleave itself in vivo.

It is found in the forespore intermembrane space. The enzyme catalyses The enzyme shows specific recognition of a C-terminal tripeptide, Xaa-Yaa-Zaa, in which Xaa is preferably Ala or Leu, Yaa is preferably Ala or Tyr, and Zaa is preferably Ala, but then cleaves at a variable distance from the C-terminus. A typical cleavage is -Ala-Ala-|-Arg-Ala-Ala-Lys-Glu-Asn-Tyr-Ala-Leu-Ala-Ala.. With respect to regulation, activated by peptide binding to the PDZ domain. Involved in the signal transduction pathway leading to the proteolytic activation of the mother cell transcription factor pro-sigma-K during sporulation. The signaling serine protease CtpB triggers pro-sigma-K processing by cleaving the pre-processed regulatory protein SpoIVFA and is necessary for the proper timing of sigma-K activation. The sequence is that of Carboxy-terminal processing protease CtpB (ctpB) from Bacillus subtilis (strain 168).